Consider the following 1027-residue polypeptide: Abnormal embryogenesis protein 30 (1027 aa).

WD repeat units lie at residues 18 to 65 (RTPF…IQAV) and 70 to 109 (KLDS…VRFS). Disordered stretches follow at residues 619-655 (NDSS…ACDL) and 1005-1027 (AMDS…DDDI). Acidic residues-rich tracts occupy residues 625–647 (LEED…EPEG) and 1014–1027 (DNGE…DDDI).

This sequence belongs to the APC4 family. As to quaternary structure, the APC/C is probably composed of at least 12 subunits: apc-2, apc-10, apc-11, cdc-26, emb-1, emb-27, emb-30, mat-1, mat-2, mat-3, such-1 and gfi-3.

It functions in the pathway protein modification; protein ubiquitination. Functionally, probable component of the anaphase promoting complex/cyclosome (APC/C), a cell cycle-regulated E3 ubiquitin ligase that controls progression through mitosis and the G1 phase of the cell cycle. The APC/C complex acts by mediating ubiquitination and subsequent degradation of target proteins. Developmental role in early embryogenesis and the metaphase to anaphase transition in oocyte and spermatocyte meiosis and mitosis in somatic and germ cells. Required for embryonic anterior-posterior axis formation. Negatively regulates ify-1 protein levels during meiosis I. Plays a role in regulating the abundance of glr-1 receptors in postmitotic neurons, which may in turn control animal locomotion. Involved in regulating GABA neurotransmitter release at neuromuscular junctions in GABA motor neurons. In Caenorhabditis elegans, this protein is Abnormal embryogenesis protein 30.